The primary structure comprises 597 residues: Proline--tRNA ligase (597 aa).

This sequence belongs to the class-II aminoacyl-tRNA synthetase family. ProS type 1 subfamily. In terms of assembly, homodimer.

Its subcellular location is the cytoplasm. It catalyses the reaction tRNA(Pro) + L-proline + ATP = L-prolyl-tRNA(Pro) + AMP + diphosphate. In terms of biological role, catalyzes the attachment of proline to tRNA(Pro) in a two-step reaction: proline is first activated by ATP to form Pro-AMP and then transferred to the acceptor end of tRNA(Pro). As ProRS can inadvertently accommodate and process non-cognate amino acids such as alanine and cysteine, to avoid such errors it has two additional distinct editing activities against alanine. One activity is designated as 'pretransfer' editing and involves the tRNA(Pro)-independent hydrolysis of activated Ala-AMP. The other activity is designated 'posttransfer' editing and involves deacylation of mischarged Ala-tRNA(Pro). The misacylated Cys-tRNA(Pro) is not edited by ProRS. The sequence is that of Proline--tRNA ligase from Bifidobacterium longum (strain NCC 2705).